A 297-amino-acid chain; its full sequence is UDP-N-acetylenolpyruvoylglucosamine reductase (297 aa).

Residues 27–192 (IGGPADALLE…LRAAYRLHPG (166 aa)) form the FAD-binding PCMH-type domain. The active site involves Arg-170. Catalysis depends on Ser-220, which acts as the Proton donor. Glu-290 is an active-site residue.

Belongs to the MurB family. FAD is required as a cofactor.

The protein localises to the cytoplasm. The catalysed reaction is UDP-N-acetyl-alpha-D-muramate + NADP(+) = UDP-N-acetyl-3-O-(1-carboxyvinyl)-alpha-D-glucosamine + NADPH + H(+). Its pathway is cell wall biogenesis; peptidoglycan biosynthesis. In terms of biological role, cell wall formation. The protein is UDP-N-acetylenolpyruvoylglucosamine reductase of Rubrobacter xylanophilus (strain DSM 9941 / JCM 11954 / NBRC 16129 / PRD-1).